A 160-amino-acid polypeptide reads, in one-letter code: Type IV major fimbrial protein FimA (160 aa).

Positions 1–7 (MKSLQKG) are cleaved as a propeptide — leader sequence. An N-methylphenylalanine modification is found at phenylalanine 8. A helical transmembrane segment spans residues 8 to 28 (FTLIELMIVVAIIGILAAFAI). Cysteines 63 and 105 form a disulfide.

Belongs to the N-Me-Phe pilin family. As to quaternary structure, the pili are polar flexible filaments of about 5.4 nanometers diameter and 2.5 micrometers average length; they consist of only a single polypeptide chain arranged in a helical configuration of five subunits per turn in the assembled pilus.

The protein localises to the fimbrium. It localises to the membrane. In terms of biological role, major component of the type IV fimbriae that plays an essential role in twitching motility, natural transformation, and protease secretion. The protein is Type IV major fimbrial protein FimA (fimA) of Dichelobacter nodosus (Bacteroides nodosus).